A 363-amino-acid polypeptide reads, in one-letter code: Photosystem II protein D1 1 (363 aa).

A run of 3 helical transmembrane segments spans residues 32 to 49 (YVGW…VSAI), 121 to 136 (HFLI…QWEL), and 145 to 159 (WIAM…AATA). Residue His-121 participates in chlorophyll a binding. Tyr-129 is a pheophytin a binding site. Glu-173 and Glu-192 together coordinate [CaMn4O5] cluster. Residues 200–221 (FHMLGVVGVFGGAFLSAMHGSL) form a helical membrane-spanning segment. Chlorophyll a is bound at residue His-201. A quinone contacts are provided by residues His-218 and 268 to 269 (AF). His-218 is a Fe cation binding site. Residue His-276 participates in Fe cation binding. A helical membrane pass occupies residues 278 to 292 (LLAVLPTIGIWFAAL). [CaMn4O5] cluster contacts are provided by His-336 and Ala-348. The propeptide occupies 349–363 (STESKEIPTIPIMTS).

Belongs to the reaction center PufL/M/PsbA/D family. PSII is composed of 1 copy each of membrane proteins PsbA, PsbB, PsbC, PsbD, PsbE, PsbF, PsbH, PsbI, PsbJ, PsbK, PsbL, PsbM, PsbT, PsbX, PsbY, PsbZ, Psb30/Ycf12, peripheral proteins PsbO, CyanoQ (PsbQ), PsbU, PsbV and a large number of cofactors. It forms dimeric complexes. Requires The D1/D2 heterodimer binds P680, chlorophylls that are the primary electron donor of PSII, and subsequent electron acceptors. It shares a non-heme iron and each subunit binds pheophytin, quinone, additional chlorophylls, carotenoids and lipids. D1 provides most of the ligands for the Mn4-Ca-O5 cluster of the oxygen-evolving complex (OEC). There is also a Cl(-1) ion associated with D1 and D2, which is required for oxygen evolution. The PSII complex binds additional chlorophylls, carotenoids and specific lipids. as cofactor. Tyr-164 forms a radical intermediate that is referred to as redox-active TyrZ, YZ or Y-Z. In terms of processing, C-terminally processed by CtpA; processing is essential to allow assembly of the oxygen-evolving complex and thus photosynthetic growth.

Its subcellular location is the cellular thylakoid membrane. The enzyme catalyses 2 a plastoquinone + 4 hnu + 2 H2O = 2 a plastoquinol + O2. Photosystem II (PSII) is a light-driven water:plastoquinone oxidoreductase that uses light energy to abstract electrons from H(2)O, generating O(2) and a proton gradient subsequently used for ATP formation. It consists of a core antenna complex that captures photons, and an electron transfer chain that converts photonic excitation into a charge separation. The D1/D2 (PsbA/PsbD) reaction center heterodimer binds P680, the primary electron donor of PSII as well as several subsequent electron acceptors. The chain is Photosystem II protein D1 1 from Acaryochloris marina (strain MBIC 11017).